We begin with the raw amino-acid sequence, 365 residues long: Chorismate synthase (365 aa).

Arg48 is a binding site for NADP(+). FMN is bound by residues 125–127 (RSS), 238–239 (NA), Gly278, 293–297 (KPTSS), and Arg319.

This sequence belongs to the chorismate synthase family. As to quaternary structure, homotetramer. FMNH2 is required as a cofactor.

The catalysed reaction is 5-O-(1-carboxyvinyl)-3-phosphoshikimate = chorismate + phosphate. Its pathway is metabolic intermediate biosynthesis; chorismate biosynthesis; chorismate from D-erythrose 4-phosphate and phosphoenolpyruvate: step 7/7. Its function is as follows. Catalyzes the anti-1,4-elimination of the C-3 phosphate and the C-6 proR hydrogen from 5-enolpyruvylshikimate-3-phosphate (EPSP) to yield chorismate, which is the branch point compound that serves as the starting substrate for the three terminal pathways of aromatic amino acid biosynthesis. This reaction introduces a second double bond into the aromatic ring system. The protein is Chorismate synthase of Ruthia magnifica subsp. Calyptogena magnifica.